We begin with the raw amino-acid sequence, 122 residues long: Protein POLR1D, isoform 2 (122 aa).

Position 1 is an N-acetylmethionine (M1). The disordered stretch occupies residues 48–122; sequence INTIKNTLPS…DKYEKRSNRR (75 aa). The span at 57 to 83 shows a compositional bias: basic and acidic residues; sequence SHKEQDHEQKEGDKEPAKSQAQKEENP. Residues 84 to 96 are compositionally biased toward basic residues; sequence KKHRSHPYKHSFR. S104 is subject to Phosphoserine. Basic and acidic residues predominate over residues 110-122; that stretch reads SSQDKYEKRSNRR.

The sequence is that of Protein POLR1D, isoform 2 (POLR1D) from Homo sapiens (Human).